The chain runs to 57 residues: Catalase-1 (57 aa).

Tyr-37 lines the heme pocket.

Homodimer. It depends on heme as a cofactor.

It catalyses the reaction 2 H2O2 = O2 + 2 H2O. In terms of biological role, decomposes hydrogen peroxide into water and oxygen; serves to protect cells from the toxic effects of hydrogen peroxide. The polypeptide is Catalase-1 (Comamonas terrigena).